A 67-amino-acid polypeptide reads, in one-letter code: Conotoxin LeDr192 (67 aa).

Residues 1-19 (MRCFPVFIILLLLIASAPC) form the signal peptide. Positions 20 to 49 (FDARTKTDDDVPLSPLRDNLKRTIRTRLNI) are excised as a propeptide. T65 bears the Threonine amide mark.

The protein belongs to the conotoxin T superfamily. Post-translationally, contains 2 disulfide bonds that can be either 'C1-C3, C2-C4' or 'C1-C4, C2-C3', since these disulfide connectivities have been observed for conotoxins with cysteine framework V (for examples, see AC P0DQQ7 and AC P81755). Expressed by the venom duct.

The protein resides in the secreted. The protein is Conotoxin LeDr192 of Conus litteratus (Lettered cone).